We begin with the raw amino-acid sequence, 386 residues long: Interleukin-13 receptor subunit alpha-2 (386 aa).

Residues 1-21 (MAFIHLDVGFLYTLLVCTAFG) form the signal peptide. The Extracellular portion of the chain corresponds to 22-338 (SMLSNAEIKV…CWKGDIWKET (317 aa)). Fibronectin type-III domains follow at residues 33–133 (PPQD…SPQG), 138–234 (KIQD…LQNI), and 239–338 (PPDY…WKET). A disulfide bridge connects residues Cys-64 and Cys-112. The N-linked (GlcNAc...) asparagine glycan is linked to Asn-114. 2 disulfide bridges follow: Cys-144–Cys-154 and Cys-183–Cys-196. Residues Asn-214 and Asn-298 are each glycosylated (N-linked (GlcNAc...) asparagine). The cysteines at positions 268 and 315 are disulfide-linked. The WSXWS motif signature appears at 321 to 325 (WSEWS). The chain crosses the membrane as a helical span at residues 339–359 (LVFFLIPFAFVSIFVLVITCL). The Cytoplasmic segment spans residues 360-386 (LLYKQRALLKTIFHTKKEVFSHQDTFC).

This sequence belongs to the type I cytokine receptor family. Type 5 subfamily. In terms of assembly, interacts with IL4RA. Interacts with high affinity to interleukin-13 (IL13), but not to interleukin-4 (IL4). In terms of processing, cleaved by MMP8 leading to a soluble form that is also able to interact with IL13. In terms of tissue distribution, expressed in kidney, placenta, liver, skeletal muscle and thymus. Expression was not seen in whole blood and heart.

The protein resides in the cell membrane. Its function is as follows. Cell surface receptor that plays a role in the regulation of IL-13-mediated responses. Functions as a decoy receptor that inhibits IL-13- and IL-4-mediated signal transduction via the JAK-STAT pathway and thereby modulates immune responses and inflammation. Serves as a functional signaling receptor for IL-13 in an alternative pathway involving AP-1 ultimately leading to the production of TGFB1. This Canis lupus familiaris (Dog) protein is Interleukin-13 receptor subunit alpha-2 (IL13RA2).